A 387-amino-acid polypeptide reads, in one-letter code: Xylose operon regulatory protein (387 aa).

One can recognise an HTH araC/xylS-type domain in the interval 288–386; sequence IQAMHYIRHR…EMTPKEFRLN (99 aa). 2 consecutive DNA-binding regions (H-T-H motif) follow at residues 305-326 and 353-376; these read GQVL…KNEM and IKEI…KKEF.

In terms of biological role, regulatory protein for the xylBAFGHR operon. The polypeptide is Xylose operon regulatory protein (xylR) (Haemophilus influenzae (strain ATCC 51907 / DSM 11121 / KW20 / Rd)).